The following is a 56-amino-acid chain: Putative 2-Cys peroxiredoxin BAS1 (56 aa).

Belongs to the peroxiredoxin family. AhpC/Prx1 subfamily. As to quaternary structure, homodimer; disulfide-linked, upon oxidation.

It localises to the plastid. Its subcellular location is the chloroplast. The enzyme catalyses a hydroperoxide + [thioredoxin]-dithiol = an alcohol + [thioredoxin]-disulfide + H2O. Thiol-specific peroxidase that catalyzes the reduction of hydrogen peroxide and organic hydroperoxides to water and alcohols, respectively. Plays a role in cell protection against oxidative stress by detoxifying peroxides. May be an antioxidant enzyme particularly in the developing shoot and photosynthesizing leaf. The protein is Putative 2-Cys peroxiredoxin BAS1 of Pinus strobus (Eastern white pine).